The chain runs to 418 residues: Xanthosine permease (418 aa).

Residues 1–9 (MSIAMRLKV) lie on the Cytoplasmic side of the membrane. The chain crosses the membrane as a helical span at residues 10 to 30 (MSFLQYFIWGSWLVTLGSYMI). Residues 31-41 (NTLHFTGANVG) are Periplasmic-facing. The chain crosses the membrane as a helical span at residues 42-62 (MVYSSKGIAAIIMPGIMGIIA). Residues 63 to 70 (DKWLRAER) are Cytoplasmic-facing. The next 2 membrane-spanning stretches (helical) occupy residues 71-91 (AYML…SVTD) and 92-112 (PDMM…TIAL). Residues 113 to 136 (SNSVSYSCLAQAGLDPVTAFPPIR) lie on the Cytoplasmic side of the membrane. A helical transmembrane segment spans residues 137–157 (VFGTVGFIVAMWAVSLLHLEL). Residues 158–159 (SS) are Periplasmic-facing. The helical transmembrane segment at 160–180 (LQLYIASGASLLLSAYALTLP) threads the bilayer. At 181-209 (KIPVAEKKATTSLASKLGLDAFVLFKNPR) the chain is on the cytoplasmic side. A helical membrane pass occupies residues 210–230 (MAIFFLFAMMLGAVLQITNVF). Topologically, residues 231–254 (GNPFLHDFARNPEFADSFVVKYPS) are periplasmic. A helical membrane pass occupies residues 255-275 (ILLSVSQMAEVGFILTIPFFL). At 276–277 (KR) the chain is on the cytoplasmic side. A helical transmembrane segment spans residues 278-298 (FGIKTVMLMSMVAWTLRFGFF). The Periplasmic segment spans residues 299–306 (AYGDPSTT). Residues 307–327 (GFILLLLSMIVYGCAFDFFNI) form a helical membrane-spanning segment. Over 328 to 348 (SGSVFVEQEVDSSIRASAQGL) the chain is Cytoplasmic. A helical transmembrane segment spans residues 349–369 (FMTMVNGVGAWVGSILSGMAV). Residues 370–381 (DYFSVDGVKDWQ) lie on the Periplasmic side of the membrane. A helical transmembrane segment spans residues 382–402 (TIWLVFAGYALFLAVIFFFGF). Residues 403 to 418 (KYNHDPEKIKHRAVTH) are Cytoplasmic-facing.

It belongs to the major facilitator superfamily. Nucleoside:H(+) symporter (NHS) (TC 2.A.1.10) family.

The protein resides in the cell inner membrane. The enzyme catalyses xanthosine(in) + H(+)(in) = xanthosine(out) + H(+)(out). Its activity is regulated as follows. Transport is abolished by the proton uncoupler 2,4-dinitrophenol. Its function is as follows. Uptake of xanthosine. Can also transport other nucleosides such as inosine, adenosine, cytidine, uridine and thymidine. Transport is driven by a proton motive force. This Escherichia coli (strain K12) protein is Xanthosine permease.